The sequence spans 394 residues: THAP domain-containing protein 5 (394 aa).

The THAP-type zinc finger occupies 1-84 (MPRYCAAICC…LKQTAIPTIF (84 aa)). A disordered region spans residues 86–109 (LPEDNQEKDPSKKKSQKKKLKSEK). Residues 320 to 323 (EHSY) carry the HCFC1-binding motif (HBM) motif. Residues 347–381 (LELQEQQTLGRLKSLEALIRQLKQENWLSEENVKI) are a coiled coil.

As to quaternary structure, interacts with HTRA2; under apoptotic conditions. Interacts with ABRAXAS2. Post-translationally, cleaved by HTRA2 during apoptosis.

The protein resides in the nucleus. Its function is as follows. Has sequence-specific DNA-binding activity and can function as transcriptional repressor (in vitro). May be a regulator of cell cycle: THAP5 overexpression in human cell lines causes cell cycle arrest at G2/M phase. The sequence is that of THAP domain-containing protein 5 (THAP5) from Bos taurus (Bovine).